Reading from the N-terminus, the 265-residue chain is Phosphonoacetaldehyde hydrolase (265 aa).

The Nucleophile role is filled by Asp-9. Positions 9 and 11 each coordinate Mg(2+). Lys-50 (schiff-base intermediate with substrate) is an active-site residue. A Mg(2+)-binding site is contributed by Asp-184.

This sequence belongs to the HAD-like hydrolase superfamily. PhnX family. Homodimer. Mg(2+) serves as cofactor.

The enzyme catalyses phosphonoacetaldehyde + H2O = acetaldehyde + phosphate + H(+). In terms of biological role, involved in phosphonate degradation. In Lactiplantibacillus plantarum (strain ATCC BAA-793 / NCIMB 8826 / WCFS1) (Lactobacillus plantarum), this protein is Phosphonoacetaldehyde hydrolase.